A 498-amino-acid polypeptide reads, in one-letter code: PHD finger protein 10 (498 aa).

Positions 1 to 10 are enriched in low complexity; the sequence is MAAAAGPGAA. The disordered stretch occupies residues 1–62; that stretch reads MAAAAGPGAA…SSRSCETSSQ (62 aa). Residue alanine 2 is modified to N-acetylalanine. 3 positions are modified to phosphoserine: serine 12, serine 36, and serine 50. Residues 89–185 form an essential to induce neural progenitor proliferation region; that stretch reads MLQEQVSEYL…HYKEYSQMQQ (97 aa). Residues 89 to 295 form an SAY region; the sequence is MLQEQVSEYL…PPLDPELPAL (207 aa). A Glycyl lysine isopeptide (Lys-Gly) (interchain with G-Cter in SUMO2) cross-link involves residue lysine 241. Serine 270 carries the phosphoserine modification. Residues 285 to 296 are compositionally biased toward low complexity; sequence EPPLDPELPALD. Residues 285–368 form a disordered region; it reads EPPLDPELPA…KRSVLSKSVP (84 aa). The interval 292–334 is essential to induce neural progenitor proliferation; sequence LPALDSDGDSDDGEDGRGDEKRKNKGTSDSSSGNVSEGESPPD. Phosphoserine occurs at positions 297, 301, 327, and 331. A compositionally biased stretch (polar residues) spans 318-328; that stretch reads TSDSSSGNVSE. Residues 345-359 show a composition bias toward basic and acidic residues; the sequence is KSKDKAATPRKDGPK. Residues 379-436 form a PHD-type 1; degenerate zinc finger; the sequence is ICGICLKGKESNKKGKAESLIHCSQCENSGHPSCLDMTMELVSMIKTYPWQCMECKTC. A Glycyl lysine isopeptide (Lys-Gly) (interchain with G-Cter in SUMO2) cross-link involves residue lysine 385. The PHD-type 2; degenerate zinc-finger motif lies at 438 to 481; the sequence is ICGQPHHEEEMMFCDMCDRGYHTFCVGLGAIPSGRWICDCCQRA.

The protein belongs to the SAYP family. In terms of assembly, component of neural progenitors-specific chromatin remodeling complex (npBAF complex) composed of at least, ARID1A/BAF250A or ARID1B/BAF250B, SMARCD1/BAF60A, SMARCD3/BAF60C, SMARCA2/BRM/BAF190B, SMARCA4/BRG1/BAF190A, SMARCB1/BAF47, SMARCC1/BAF155, SMARCE1/BAF57, SMARCC2/BAF170, PHF10/BAF45A, ACTL6A/BAF53A and actin. Interacts with ACTL6A/BAF53A, SMARCA2/BRM/BAF190B, SMARCA4/BRG1/BAF190A and PBRM1/BAF180.

The protein localises to the nucleus. Its function is as follows. Involved in transcription activity regulation by chromatin remodeling. Belongs to the neural progenitors-specific chromatin remodeling complex (npBAF complex) and is required for the proliferation of neural progenitors. During neural development a switch from a stem/progenitor to a post-mitotic chromatin remodeling mechanism occurs as neurons exit the cell cycle and become committed to their adult state. The transition from proliferating neural stem/progenitor cells to post-mitotic neurons requires a switch in subunit composition of the npBAF and nBAF complexes. As neural progenitors exit mitosis and differentiate into neurons, npBAF complexes which contain ACTL6A/BAF53A and PHF10/BAF45A, are exchanged for homologous alternative ACTL6B/BAF53B and DPF1/BAF45B or DPF3/BAF45C subunits in neuron-specific complexes (nBAF). The npBAF complex is essential for the self-renewal/proliferative capacity of the multipotent neural stem cells. The nBAF complex along with CREST plays a role regulating the activity of genes essential for dendrite growth. This chain is PHD finger protein 10 (PHF10), found in Homo sapiens (Human).